The following is a 91-amino-acid chain: Mercuric transport protein periplasmic component (91 aa).

The signal sequence occupies residues 1–19 (MKKLFASLALAAVVAPVWA). The 67-residue stretch at 22 to 88 (QTVTLSVPGM…ATADAGYPSS (67 aa)) folds into the HMA domain. Hg(2+) contacts are provided by cysteine 33 and cysteine 36.

Belongs to the MerP family. As to quaternary structure, monomer.

The protein resides in the periplasm. Functionally, involved in mercury resistance. Acts as a mercury scavenger that specifically binds to a mercuric ion in the periplasm and probably passes it to the cytoplasmic mercuric reductase MerA via the mercuric transport protein MerT. The chain is Mercuric transport protein periplasmic component from Pseudomonas aeruginosa.